We begin with the raw amino-acid sequence, 175 residues long: ATP synthase subunit b (175 aa).

Residues Leu22–Leu42 form a helical membrane-spanning segment.

It belongs to the ATPase B chain family. In terms of assembly, F-type ATPases have 2 components, F(1) - the catalytic core - and F(0) - the membrane proton channel. F(1) has five subunits: alpha(3), beta(3), gamma(1), delta(1), epsilon(1). F(0) has four main subunits: a(1), b(1), b'(1) and c(10-14). The alpha and beta chains form an alternating ring which encloses part of the gamma chain. F(1) is attached to F(0) by a central stalk formed by the gamma and epsilon chains, while a peripheral stalk is formed by the delta, b and b' chains.

It is found in the cell inner membrane. Its function is as follows. F(1)F(0) ATP synthase produces ATP from ADP in the presence of a proton or sodium gradient. F-type ATPases consist of two structural domains, F(1) containing the extramembraneous catalytic core and F(0) containing the membrane proton channel, linked together by a central stalk and a peripheral stalk. During catalysis, ATP synthesis in the catalytic domain of F(1) is coupled via a rotary mechanism of the central stalk subunits to proton translocation. Functionally, component of the F(0) channel, it forms part of the peripheral stalk, linking F(1) to F(0). The protein is ATP synthase subunit b of Gloeobacter violaceus (strain ATCC 29082 / PCC 7421).